We begin with the raw amino-acid sequence, 177 residues long: Large ribosomal subunit protein uL6 (177 aa).

This sequence belongs to the universal ribosomal protein uL6 family. Part of the 50S ribosomal subunit.

This protein binds to the 23S rRNA, and is important in its secondary structure. It is located near the subunit interface in the base of the L7/L12 stalk, and near the tRNA binding site of the peptidyltransferase center. The chain is Large ribosomal subunit protein uL6 from Allorhizobium ampelinum (strain ATCC BAA-846 / DSM 112012 / S4) (Agrobacterium vitis (strain S4)).